The primary structure comprises 539 residues: Chaperonin GroEL (539 aa).

ATP-binding positions include 29–32 (TLGP), 86–90 (DGTTT), glycine 413, 476–478 (NAA), and aspartate 492.

This sequence belongs to the chaperonin (HSP60) family. In terms of assembly, forms a cylinder of 14 subunits composed of two heptameric rings stacked back-to-back. Interacts with the co-chaperonin GroES.

It is found in the cytoplasm. It carries out the reaction ATP + H2O + a folded polypeptide = ADP + phosphate + an unfolded polypeptide.. Functionally, together with its co-chaperonin GroES, plays an essential role in assisting protein folding. The GroEL-GroES system forms a nano-cage that allows encapsulation of the non-native substrate proteins and provides a physical environment optimized to promote and accelerate protein folding. In Parageobacillus thermoglucosidasius (Geobacillus thermoglucosidasius), this protein is Chaperonin GroEL.